A 411-amino-acid chain; its full sequence is 2,3-bisphosphoglycerate-independent phosphoglycerate mutase (411 aa).

It belongs to the BPG-independent phosphoglycerate mutase family. A-PGAM subfamily.

It catalyses the reaction (2R)-2-phosphoglycerate = (2R)-3-phosphoglycerate. It participates in carbohydrate degradation; glycolysis; pyruvate from D-glyceraldehyde 3-phosphate: step 3/5. In terms of biological role, catalyzes the interconversion of 2-phosphoglycerate and 3-phosphoglycerate. The polypeptide is 2,3-bisphosphoglycerate-independent phosphoglycerate mutase (Thermococcus kodakarensis (strain ATCC BAA-918 / JCM 12380 / KOD1) (Pyrococcus kodakaraensis (strain KOD1))).